A 375-amino-acid polypeptide reads, in one-letter code: MESLSEGTTAGYQQIHDGIIHLVDSARTETVRSVNALMTATYQEIGRRIVEFEQGGEARAAYGAQLIKRLSKDLCLRYKRGFSAKNLRQMRLFYLFFQHVEIHQTMSGELTPLGIPQTPSAEFPSAKIWQTLSAKSFPLPRSTYVRLLSVKNADARSFYEKETLRCGWSVRQLERQIATQFYERTLLSHDKSAMLQQHAPAETHILPQQAIRDPFVLEFLELKDEYSESDFEEALINHLMDFMLELGDDFAFVGRQRRLRIDDNWFRVDLLFFHRRLRCLLIVDLKVGKFSYSDAGQMNMYLNYAKEHWTLPDENPPIGLVLCAEKGAGEAHYALAGLPNTVLASEYKMQLPDEKRLADELVRTQAVLEEGYRRR.

In terms of assembly, interacts with DNA processing enzymes, including the restriction complex HsdMRS, the integrases IntF and IntS, and the recombinase PinE.

May be a nuclease involved in DNA recombination and repair. The polypeptide is Putative nuclease YhcG (yhcG) (Escherichia coli (strain K12)).